The sequence spans 562 residues: Serine/threonine-protein kinase STN7, chloroplastic (562 aa).

Residues 1 to 45 (MATISPGGAYIGTPSPFLGKKLKPFSLTSPILSFKPTVKLNSSCR) constitute a chloroplast transit peptide. The region spanning 134 to 452 (FVVGKKLGEG…AKAALAHPYF (319 aa)) is the Protein kinase domain. Residues 140–148 (LGEGSFGVV) and K167 contribute to the ATP site. D279 acts as the Proton acceptor in catalysis. A Phosphoserine modification is found at S526. Phosphothreonine occurs at positions 537 and 541.

Belongs to the protein kinase superfamily. Ser/Thr protein kinase family. In terms of processing, phosphorylated.

Its subcellular location is the plastid. It localises to the chloroplast thylakoid membrane. It catalyses the reaction L-seryl-[protein] + ATP = O-phospho-L-seryl-[protein] + ADP + H(+). It carries out the reaction L-threonyl-[protein] + ATP = O-phospho-L-threonyl-[protein] + ADP + H(+). In terms of biological role, serine/threonine protein kinase required for state transition by phosphorylating light-harvesting complex II outer antennae (LCHII). State transition plays a central role in response to environmental changes and allows to adjust to changing light conditions via the redistribution of light excitation energy between photosystem II (PSII) and photosystem I (PSI). Phosphorylates the minor light harvesting protein LHCB4.2/CP29 and is involved in the light-dependent phosphorylation of TSP9. Acts as a key component of the long-term response (LTR) signaling pathway. Mediates phosphorylation-dependent PTAC16 subcellular localization to regulate plastid gene expression. The sequence is that of Serine/threonine-protein kinase STN7, chloroplastic (STN7) from Arabidopsis thaliana (Mouse-ear cress).